The following is a 335-amino-acid chain: Biotin synthase (335 aa).

The disordered stretch occupies residues 1-20 (MVSVGTQSHSGRDQAEQNPS). The 226-residue stretch at 59-284 (GHLQKSSLLS…MMPQSMVRLS (226 aa)) folds into the Radical SAM core domain. [4Fe-4S] cluster-binding residues include Cys-74, Cys-78, and Cys-81. Residues Cys-118, Cys-150, Cys-210, and Arg-282 each coordinate [2Fe-2S] cluster.

Belongs to the radical SAM superfamily. Biotin synthase family. In terms of assembly, homodimer. [4Fe-4S] cluster serves as cofactor. Requires [2Fe-2S] cluster as cofactor.

It carries out the reaction (4R,5S)-dethiobiotin + (sulfur carrier)-SH + 2 reduced [2Fe-2S]-[ferredoxin] + 2 S-adenosyl-L-methionine = (sulfur carrier)-H + biotin + 2 5'-deoxyadenosine + 2 L-methionine + 2 oxidized [2Fe-2S]-[ferredoxin]. It participates in cofactor biosynthesis; biotin biosynthesis; biotin from 7,8-diaminononanoate: step 2/2. In terms of biological role, catalyzes the conversion of dethiobiotin (DTB) to biotin by the insertion of a sulfur atom into dethiobiotin via a radical-based mechanism. The protein is Biotin synthase of Zymomonas mobilis subsp. mobilis (strain ATCC 31821 / ZM4 / CP4).